A 210-amino-acid chain; its full sequence is Small ribosomal subunit protein uS7 (210 aa).

It belongs to the universal ribosomal protein uS7 family. Component of the small ribosomal subunit. Part of the small subunit (SSU) processome, composed of more than 70 proteins and the RNA chaperone small nucleolar RNA (snoRNA) U3.

It is found in the cytoplasm. The protein localises to the nucleus. Its subcellular location is the nucleolus. Functionally, component of the small ribosomal subunit. The ribosome is a large ribonucleoprotein complex responsible for the synthesis of proteins in the cell. Part of the small subunit (SSU) processome, first precursor of the small eukaryotic ribosomal subunit. During the assembly of the SSU processome in the nucleolus, many ribosome biogenesis factors, an RNA chaperone and ribosomal proteins associate with the nascent pre-rRNA and work in concert to generate RNA folding, modifications, rearrangements and cleavage as well as targeted degradation of pre-ribosomal RNA by the RNA exosome. This Caenorhabditis elegans protein is Small ribosomal subunit protein uS7 (rps-5).